A 319-amino-acid chain; its full sequence is Acetyl-coenzyme A carboxylase carboxyl transferase subunit alpha (319 aa).

One can recognise a CoA carboxyltransferase C-terminal domain in the interval 35 to 296; that stretch reads NLDEEVQRLR…KAQLLADLSD (262 aa).

This sequence belongs to the AccA family. Acetyl-CoA carboxylase is a heterohexamer composed of biotin carboxyl carrier protein (AccB), biotin carboxylase (AccC) and two subunits each of ACCase subunit alpha (AccA) and ACCase subunit beta (AccD).

Its subcellular location is the cytoplasm. The catalysed reaction is N(6)-carboxybiotinyl-L-lysyl-[protein] + acetyl-CoA = N(6)-biotinyl-L-lysyl-[protein] + malonyl-CoA. It participates in lipid metabolism; malonyl-CoA biosynthesis; malonyl-CoA from acetyl-CoA: step 1/1. In terms of biological role, component of the acetyl coenzyme A carboxylase (ACC) complex. First, biotin carboxylase catalyzes the carboxylation of biotin on its carrier protein (BCCP) and then the CO(2) group is transferred by the carboxyltransferase to acetyl-CoA to form malonyl-CoA. The chain is Acetyl-coenzyme A carboxylase carboxyl transferase subunit alpha from Yersinia enterocolitica serotype O:8 / biotype 1B (strain NCTC 13174 / 8081).